Consider the following 312-residue polypeptide: Ribosomal protein uL3 glutamine methyltransferase (312 aa).

The protein belongs to the protein N5-glutamine methyltransferase family. PrmB subfamily.

It carries out the reaction L-glutaminyl-[ribosomal protein uL3] + S-adenosyl-L-methionine = N(5)-methyl-L-glutaminyl-[ribosomal protein uL3] + S-adenosyl-L-homocysteine + H(+). Its function is as follows. Methylates large ribosomal subunit protein uL3 on a specific glutamine residue. The protein is Ribosomal protein uL3 glutamine methyltransferase of Xylella fastidiosa (strain 9a5c).